A 133-amino-acid chain; its full sequence is Stage III sporulation protein AD (133 aa).

Helical transmembrane passes span 2–22 (QIDI…SLIV), 29–49 (FAFL…VDQI), and 108–128 (ILIL…ILGL).

Its subcellular location is the cell membrane. This Bacillus subtilis (strain 168) protein is Stage III sporulation protein AD (spoIIIAD).